We begin with the raw amino-acid sequence, 146 residues long: Cytochrome c-556 (146 aa).

A signal peptide spans 1–24 (MCMKLKTITAAMLFGCLCAGAVYA). Positions 35, 135, 138, and 139 each coordinate heme c.

Monomer. Post-translationally, binds 1 heme c group covalently per subunit.

Low-spin monoheme cytochrome c. The chain is Cytochrome c-556 from Agrobacterium fabrum (strain C58 / ATCC 33970) (Agrobacterium tumefaciens (strain C58)).